A 283-amino-acid chain; its full sequence is 5'-nucleotidase SurE (283 aa).

A divalent metal cation is bound by residues Asp-14, Asp-15, Ser-47, and Asn-105.

This sequence belongs to the SurE nucleotidase family. Requires a divalent metal cation as cofactor.

The protein localises to the cytoplasm. The enzyme catalyses a ribonucleoside 5'-phosphate + H2O = a ribonucleoside + phosphate. In terms of biological role, nucleotidase that shows phosphatase activity on nucleoside 5'-monophosphates. The sequence is that of 5'-nucleotidase SurE from Chlamydia trachomatis serovar A (strain ATCC VR-571B / DSM 19440 / HAR-13).